A 354-amino-acid polypeptide reads, in one-letter code: Guanine nucleotide-binding protein G(i) subunit alpha (354 aa).

Glycine 2 carries the N-myristoyl glycine lipid modification. Residue cysteine 3 is the site of S-palmitoyl cysteine attachment. Residues 32-354 form the G-alpha domain; the sequence is REVKLLLLGA…KNNLKDCGLF (323 aa). A G1 motif region spans residues 35–48; the sequence is KLLLLGAGESGKST. GTP is bound by residues 40–47, 175–181, 200–204, 269–272, and alanine 326; these read GAGESGKS, LRTRVKT, DVGGQ, and NKKD. Residues serine 47 and threonine 181 each coordinate Mg(2+). The tract at residues 173 to 181 is G2 motif; it reads DVLRTRVKT. The G3 motif stretch occupies residues 196-205; sequence FKMFDVGGQR. Residues 265-272 form a G4 motif region; the sequence is ILFLNKKD. Positions 324–329 are G5 motif; that stretch reads TCATDT.

It belongs to the G-alpha family. G(i/o/t/z) subfamily. In terms of assembly, g proteins are composed of 3 units; alpha, beta and gamma. The alpha chain contains the guanine nucleotide binding site.

Guanine nucleotide-binding proteins (G proteins) are involved as modulators or transducers in various transmembrane signaling systems. This G protein is involved in 1-methyladenine-induced oocyte maturation. This Patiria pectinifera (Starfish) protein is Guanine nucleotide-binding protein G(i) subunit alpha.